The sequence spans 338 residues: Methionyl-tRNA formyltransferase (338 aa).

110–113 (SLLP) provides a ligand contact to (6S)-5,6,7,8-tetrahydrofolate.

Belongs to the Fmt family.

It carries out the reaction L-methionyl-tRNA(fMet) + (6R)-10-formyltetrahydrofolate = N-formyl-L-methionyl-tRNA(fMet) + (6S)-5,6,7,8-tetrahydrofolate + H(+). Its function is as follows. Attaches a formyl group to the free amino group of methionyl-tRNA(fMet). The formyl group appears to play a dual role in the initiator identity of N-formylmethionyl-tRNA by promoting its recognition by IF2 and preventing the misappropriation of this tRNA by the elongation apparatus. In Synechococcus sp. (strain CC9605), this protein is Methionyl-tRNA formyltransferase.